The chain runs to 412 residues: Tyrosine--tRNA ligase (412 aa).

Tyrosine 31 lines the L-tyrosine pocket. A 'HIGH' region motif is present at residues 36–45 (PTAASLHIGH). Positions 162 and 166 each coordinate L-tyrosine. The 'KMSKS' region motif lies at 222-226 (KIGKT). Lysine 225 lines the ATP pocket. Positions 345 to 412 (KRWIDLFVGV…KKKKLVLHLI (68 aa)) constitute an S4 RNA-binding domain.

The protein belongs to the class-I aminoacyl-tRNA synthetase family. TyrS type 1 subfamily. Homodimer.

It is found in the cytoplasm. It carries out the reaction tRNA(Tyr) + L-tyrosine + ATP = L-tyrosyl-tRNA(Tyr) + AMP + diphosphate + H(+). Catalyzes the attachment of tyrosine to tRNA(Tyr) in a two-step reaction: tyrosine is first activated by ATP to form Tyr-AMP and then transferred to the acceptor end of tRNA(Tyr). This Chlamydia caviae (strain ATCC VR-813 / DSM 19441 / 03DC25 / GPIC) (Chlamydophila caviae) protein is Tyrosine--tRNA ligase.